Consider the following 356-residue polypeptide: Phosphoribosyl pyrophosphate synthase-associated protein 1 (356 aa).

Met1 is subject to N-acetylmethionine. Asn2 is modified (N-acetylproline). Residues Ser177 and Ser215 each carry the phosphoserine modification.

The protein belongs to the ribose-phosphate pyrophosphokinase family. Binds to PRPS1 and PRPS2. Ubiquitous.

In terms of biological role, seems to play a negative regulatory role in 5-phosphoribose 1-diphosphate synthesis. This chain is Phosphoribosyl pyrophosphate synthase-associated protein 1 (PRPSAP1), found in Homo sapiens (Human).